Consider the following 170-residue polypeptide: Protein-lysine myristoyltransferase HlyC (170 aa).

Active-site residues include His-23 and Asp-92. His-151 serves as a coordination point for heme.

It belongs to the RTX toxin acyltransferase family. In terms of assembly, monomer. In terms of processing, proteolytically cleaved by the protease systems ClpAP, ClpXP and FtsH, leading to its degradation.

The protein resides in the cytoplasm. It carries out the reaction tetradecanoyl-[ACP] + L-lysyl-[protein] = N(6)-tetradecanoyl-L-lysyl-[protein] + holo-[ACP] + H(+). Its activity is regulated as follows. The acyltransferase activity is inhibited by heme. Protein-lysine myristoyltransferase that catalyzes myristoylation of the protoxin (HlyA) at two internal lysine residues, thereby converting it to the active toxin. The sequence is that of Protein-lysine myristoyltransferase HlyC from Escherichia coli.